We begin with the raw amino-acid sequence, 1178 residues long: Dual specificity mitogen-activated protein kinase kinase hemipterous (1178 aa).

Disordered regions lie at residues 74-103 (SGSG…SSSS) and 115-148 (ATGT…GGGL). 2 stretches are compositionally biased toward low complexity: residues 91–103 (ATPF…SSSS) and 115–128 (ATGT…PPTT). In terms of domain architecture, Protein kinase spans 197–456 (LKHLGDLGNG…YPELLAQPFI (260 aa)). ATP is bound by residues 203 to 211 (LGNGTSGNV) and K226. The active-site Proton acceptor is the D320. The residue at position 348 (S348) is a Phosphoserine. T352 is subject to Phosphothreonine. Positions 522 to 648 (TYAGQSPTNP…DESPKKESMF (127 aa)) are disordered. Residues 523–543 (YAGQSPTNPQKTIKPTQIPSY) are compositionally biased toward polar residues. Over residues 544 to 570 (QQQQSQFFMQSATQLPQTTTTTPTATT) the composition is skewed to low complexity. The segment covering 574–593 (GGSGNGNGRGNGSGGSGNGS) has biased composition (gly residues). Low complexity predominate over residues 594–608 (GSSSSASPLSPPSAG). The segment covering 636 to 646 (KYNDESPKKES) has biased composition (basic and acidic residues). Phosphoserine occurs at positions 646 and 662. Disordered stretches follow at residues 715-783 (TTTP…LQPG), 797-851 (QNQL…STCS), 912-933 (GTSP…GNGN), 999-1026 (TSPV…VVNN), 1042-1108 (SSSS…NRGQ), and 1122-1178 (GQPP…TIDQ). Residues 724–734 (TENSQAYDSCD) show a composition bias toward polar residues. 3 stretches are compositionally biased toward low complexity: residues 735–783 (SSSN…LQPG), 808–817 (RYQQQRQQPP), and 837–851 (THST…STCS). Polar residues predominate over residues 912–928 (GTSPTLQSRSPEQQSDY). Over residues 1042 to 1055 (SSSSNTSQSTSPTT) the composition is skewed to low complexity. A phosphoserine mark is found at S1150 and S1154. Positions 1168–1178 (PQRRIYRTIDQ) are enriched in basic and acidic residues.

The protein belongs to the protein kinase superfamily. STE Ser/Thr protein kinase family. MAP kinase kinase subfamily. MAPKK is itself dependent on Ser/Thr phosphorylation for activity catalyzed by MAP kinase kinase kinases. Post-translationally, weakly autophosphorylated.

The catalysed reaction is L-seryl-[protein] + ATP = O-phospho-L-seryl-[protein] + ADP + H(+). The enzyme catalyses L-threonyl-[protein] + ATP = O-phospho-L-threonyl-[protein] + ADP + H(+). It catalyses the reaction L-tyrosyl-[protein] + ATP = O-phospho-L-tyrosyl-[protein] + ADP + H(+). In terms of biological role, required for the epithelial cell sheet movement called dorsal closure (DC), which allows establishment of the dorsal epidermis. Controls the expression in the dorsal epithelium edges of another dorsal closure gene, puckered (puc). Phosphorylates and activates the MAP kinase bsk; bsk signal transduction pathway mediates an immune response and morphogenesis. This is Dual specificity mitogen-activated protein kinase kinase hemipterous (hep) from Drosophila melanogaster (Fruit fly).